Here is a 498-residue protein sequence, read N- to C-terminus: Polygalacturonan/rhamnogalacturonan-binding protein YtcQ (498 aa).

Positions 1-22 (MGNKWRVLLIVLVLALGGVLAG) are cleaved as a signal peptide. Cysteine 23 is lipidated: N-palmitoyl cysteine. A lipid anchor (S-diacylglycerol cysteine) is attached at cysteine 23.

This sequence belongs to the bacterial solute-binding protein 1 family. The complex is probably composed of two ATP-binding proteins (MsmX), two transmembrane proteins (YtcP and YteP) and a solute-binding protein (YtcQ).

It localises to the cell membrane. Its function is as follows. Involved in pectin degradation. Part of the ABC transporter complex YtcQP-YteP involved in the uptake of polygalacturonan and rhamnogalacturonan type I. This is Polygalacturonan/rhamnogalacturonan-binding protein YtcQ (ytcQ) from Bacillus subtilis (strain 168).